Consider the following 55-residue polypeptide: Cicadin (55 aa).

Basic and acidic residues predominate over residues 1-26 (NEYHGFVDKANNENKRKKQQGRDDFV). The disordered stretch occupies residues 1–39 (NEYHGFVDKANNENKRKKQQGRDDFVVKPNNFANRRRKD).

In terms of biological role, possesses antifungal activity against B.cinerea, M.arachidicola, F.oxysporum, R.solani and C.comatus. Suppresses the activity of HIV-1 reverse transcriptase and stimulates the proliferation of murine splenocytes. This is Cicadin from Cicada flammata.